We begin with the raw amino-acid sequence, 370 residues long: Proline-rich protein 5-like (370 aa).

Phosphoserine is present on Ser28. Residues 327-370 (PTFPPPHRQCSSEPSILDSPDEMELEDVASGSQEDSELNCASLS) are disordered.

It belongs to the PROTOR family. In terms of assembly, interacts with the mammalian target of rapamycin complex 2 (mTORC2) which contains MTOR, MLST8, PRR5, RICTOR, MAPKAP1 and DEPTOR. Interacts with RFFL. Interacts (via C-terminus) with ZFP36 (via C-terminus); this interaction may accelerate ZFP36-mediated mRNA decay during stress. Interacts with RICTOR. Post-translationally, ubiquitinated. Ubiquitination by RFFL promotes proteasomal degradation of PRR5L thereby modifying the substrate-specific activity of the mTORC2 complex. Ubiquitination by RFFL is stimulated by LPA/lysophosphatidic acid.

Associates with the mTORC2 complex that regulates cellular processes including survival and organization of the cytoskeleton. Regulates the activity of the mTORC2 complex in a substrate-specific manner preventing for instance the specific phosphorylation of PKCs and thereby controlling cell migration. Plays a role in the stimulation of ZFP36-mediated mRNA decay of several ZFP36-associated mRNAs, such as TNF-alpha and GM-CSF, in response to stress. Required for ZFP36 localization to cytoplasmic stress granule (SG) and P-body (PB) in response to stress. The chain is Proline-rich protein 5-like (Prr5l) from Rattus norvegicus (Rat).